A 271-amino-acid polypeptide reads, in one-letter code: MSETEDVKRPRTESSTSCRNCGKEGHYARECPEADSKGDERSTTCFRCGEEGHMSRECPNEARSGAAGAMTCFRCGEAGHMSRDCPNSAKPGAAKGFECYKCGQEGHLSRDCPSSQGGSRGGYGQKRGRSGAQGGYSGDRTCYKCGDAGHISRDCPNGQGGYSGAGDRTCYKCGDAGHISRDCPNGQGGYSGAGDRKCYKCGESGHMSRECPSAGSTGSGDRACYKCGKPGHISRECPEAGGSYGGSRGGGDRTCYKCGEAGHISRDCPSS.

Basic and acidic residues-rich tracts occupy residues 1 to 12 and 21 to 42; these read MSETEDVKRPRT and CGKE…DERS. The interval 1-42 is disordered; that stretch reads MSETEDVKRPRTESSTSCRNCGKEGHYARECPEADSKGDERS. CCHC-type zinc fingers lie at residues 16-33, 43-60, 70-87, and 97-114; these read TSCR…ECPE, TTCF…ECPN, MTCF…DCPN, and FECY…DCPS. The tract at residues 107 to 136 is disordered; the sequence is HLSRDCPSSQGGSRGGYGQKRGRSGAQGGY. Over residues 118-136 the composition is skewed to gly residues; that stretch reads GSRGGYGQKRGRSGAQGGY. 5 CCHC-type zinc fingers span residues 140–157, 168–185, 196–213, 222–239, and 253–270; these read RTCY…DCPN, RKCY…ECPS, RACY…ECPE, and RTCY…DCPS.

The protein localises to the nucleus. Binds to single-stranded DNA located in the 5' hexanucleotide repeat region of the L.major leishmanolysin (GP63) gene. The protein is DNA-binding protein HEXBP (HEXBP) of Leishmania major.